Here is a 361-residue protein sequence, read N- to C-terminus: Mannose-1-phosphate guanyltransferase 2 (361 aa).

The protein belongs to the transferase hexapeptide repeat family.

It is found in the cytoplasm. It carries out the reaction alpha-D-mannose 1-phosphate + GTP + H(+) = GDP-alpha-D-mannose + diphosphate. Its pathway is nucleotide-sugar biosynthesis; GDP-alpha-D-mannose biosynthesis; GDP-alpha-D-mannose from alpha-D-mannose 1-phosphate (GTP route): step 1/1. Functionally, involved in cell wall synthesis where it is required for glycosylation. Involved in cell cycle progression through cell-size checkpoint. This is Mannose-1-phosphate guanyltransferase 2 (MPG1) from Candida glabrata (strain ATCC 2001 / BCRC 20586 / JCM 3761 / NBRC 0622 / NRRL Y-65 / CBS 138) (Yeast).